A 470-amino-acid chain; its full sequence is Myricetin 3-O-rhamnoside 1,2-glucosyltransferase UGT709G2 (470 aa).

Catalysis depends on His-20, which acts as the Proton acceptor. His-20 lines the an anthocyanidin pocket. Catalysis depends on Asp-117, which acts as the Charge relay. UDP-alpha-D-glucose is bound by residues Ala-340, Gln-342, His-357, Trp-360, Asn-361, Ser-362, and Glu-365. Residue Ala-380 coordinates an anthocyanidin. UDP-alpha-D-glucose contacts are provided by Asp-381 and Gln-382.

The protein belongs to the UDP-glycosyltransferase family. As to expression, expressed in young cromes.

The catalysed reaction is myricetin 3-O-alpha-L-rhamnoside + UDP-alpha-D-glucose = myricetin 3-O-[beta-D-glucosyl-(1-&gt;2)-alpha-L-rhamnoside] + UDP + H(+). The protein operates within flavonoid metabolism. Its function is as follows. Glucosyltransferase involved in montbretin A (MbA) biosynthesis. Catalyzes the glucosylation of myricetin 3-O-alpha-L-rhamnoside (MR) to produce myricetin 3-O-[beta-D-glucosyl-(1-&gt;2)-alpha-L-rhamnoside] (MRG), a precursor of MbA. MbA is a potent inhibitor of human pancreatic alpha-amylase and is being developed as drug candidate to treat type-2 diabetes. In vitro, is able to transfer UDP-xylose with 50-fold less efficiency compared with UDP-glucose. In vitro, can use myricetin 3-O-glucoside and quercetin 3-O-glucoside as substrates, although these two flavonoids may not be physiological substrates in vivo. This is Myricetin 3-O-rhamnoside 1,2-glucosyltransferase UGT709G2 from Crocosmia x crocosmiiflora (Montbretia).